The following is a 1051-amino-acid chain: Eukaryotic translation initiation factor 3 subunit A (1051 aa).

A coiled-coil region spans residues 92–121; the sequence is LKKFIELAEKKVTEAQAKADEIQSSLESAA. The PCI domain maps to 339–523; that stretch reads MTKAASFVLL…GVLTFDTDIF (185 aa). Residues 608–905 are a coiled coil; sequence RVLIEKKKEA…EAEARRAARK (298 aa). 4 stretches are compositionally biased toward basic and acidic residues: residues 617–632, 642–664, 794–901, and 916–926; these read AATD…EETR, EAEK…RDEQ, KEVS…EARR, and AELERPVERTA. 2 disordered regions span residues 617-664 and 794-1051; these read AATD…RDEQ and KEVS…QQQQ. Low complexity-rich tracts occupy residues 948–961 and 1010–1039; these read KEAA…AAAE and SSSS…SPAP.

The protein belongs to the eIF-3 subunit A family. In terms of assembly, component of the eukaryotic translation initiation factor 3 (eIF-3) complex.

It localises to the cytoplasm. Its function is as follows. RNA-binding component of the eukaryotic translation initiation factor 3 (eIF-3) complex, which is involved in protein synthesis of a specialized repertoire of mRNAs and, together with other initiation factors, stimulates binding of mRNA and methionyl-tRNAi to the 40S ribosome. The eIF-3 complex specifically targets and initiates translation of a subset of mRNAs involved in cell proliferation. The chain is Eukaryotic translation initiation factor 3 subunit A (tif32) from Aspergillus fumigatus (strain CBS 144.89 / FGSC A1163 / CEA10) (Neosartorya fumigata).